The chain runs to 377 residues: Citrate synthase (377 aa).

Residues histidine 220, histidine 259, and aspartate 313 contribute to the active site.

It belongs to the citrate synthase family. Homodimer.

It carries out the reaction oxaloacetate + acetyl-CoA + H2O = citrate + CoA + H(+). It participates in carbohydrate metabolism; tricarboxylic acid cycle; isocitrate from oxaloacetate: step 1/2. Its function is as follows. Might regulate the synthesis and function of enzymes involved in later enzymatic steps of Krebs cycle. Loss in activity results in sporulation defect. The protein is Citrate synthase (gltA) of Deinococcus radiodurans (strain ATCC 13939 / DSM 20539 / JCM 16871 / CCUG 27074 / LMG 4051 / NBRC 15346 / NCIMB 9279 / VKM B-1422 / R1).